Here is a 109-residue protein sequence, read N- to C-terminus: Fluoride-specific ion channel FluC 1 (109 aa).

A run of 4 helical transmembrane segments spans residues methionine 1 to serine 21, leucine 29 to asparagine 49, glutamate 55 to asparagine 75, and valine 87 to isoleucine 107. Positions 66 and 69 each coordinate Na(+).

This sequence belongs to the fluoride channel Fluc/FEX (TC 1.A.43) family.

The protein localises to the cell membrane. It carries out the reaction fluoride(in) = fluoride(out). Na(+) is not transported, but it plays an essential structural role and its presence is essential for fluoride channel function. In terms of biological role, fluoride-specific ion channel. Important for reducing fluoride concentration in the cell, thus reducing its toxicity. In Streptococcus pneumoniae serotype 4 (strain ATCC BAA-334 / TIGR4), this protein is Fluoride-specific ion channel FluC 1.